The chain runs to 330 residues: tRNA U34 carboxymethyltransferase (330 aa).

Residues Lys-91, Trp-105, Lys-110, Gly-130, 152–154 (DPS), 181–182 (IE), Met-196, Tyr-200, and Arg-315 contribute to the carboxy-S-adenosyl-L-methionine site.

The protein belongs to the class I-like SAM-binding methyltransferase superfamily. CmoB family. In terms of assembly, homotetramer.

The catalysed reaction is carboxy-S-adenosyl-L-methionine + 5-hydroxyuridine(34) in tRNA = 5-carboxymethoxyuridine(34) in tRNA + S-adenosyl-L-homocysteine + H(+). Its function is as follows. Catalyzes carboxymethyl transfer from carboxy-S-adenosyl-L-methionine (Cx-SAM) to 5-hydroxyuridine (ho5U) to form 5-carboxymethoxyuridine (cmo5U) at position 34 in tRNAs. The protein is tRNA U34 carboxymethyltransferase of Shewanella frigidimarina (strain NCIMB 400).